The primary structure comprises 55 residues: Protein SOX-19 (55 aa).

A DNA-binding region (HMG box) is located at residues 1–55 (MVWSQIERRKIMEQWPDMHNAEISKRLGKRWKLLPDYEKIPFIKEAERLRLKHMA).

The protein localises to the nucleus. The protein is Protein SOX-19 (Sox19) of Mus musculus (Mouse).